The following is a 175-amino-acid chain: Type II restriction enzyme NgoBV (175 aa).

It catalyses the reaction Endonucleolytic cleavage of DNA to give specific double-stranded fragments with terminal 5'-phosphates.. Functionally, a P subtype restriction enzyme that recognizes the double-stranded sequence 5'-GGNNCC-3'; the cleavage site is unknown. The sequence is that of Type II restriction enzyme NgoBV (ngoBVR) from Neisseria gonorrhoeae.